A 32-amino-acid chain; its full sequence is Photosystem II reaction center protein Z (32 aa).

The helical transmembrane segment at 12-32 (FGAAAWIGLVLLVGTLYYFVV) threads the bilayer.

This sequence belongs to the PsbZ family. PSII is composed of 1 copy each of membrane proteins PsbA, PsbB, PsbC, PsbD, PsbE, PsbF, PsbH, PsbI, PsbJ, PsbK, PsbL, PsbM, PsbT, PsbY, PsbZ, Psb30/Ycf12, at least 3 peripheral proteins of the oxygen-evolving complex and a large number of cofactors. It forms dimeric complexes.

The protein localises to the plastid. The protein resides in the chloroplast thylakoid membrane. In terms of biological role, may control the interaction of photosystem II (PSII) cores with the light-harvesting antenna, regulates electron flow through the 2 photosystem reaction centers. PSII is a light-driven water plastoquinone oxidoreductase, using light energy to abstract electrons from H(2)O, generating a proton gradient subsequently used for ATP formation. This is Photosystem II reaction center protein Z from Euglena granulata.